The primary structure comprises 504 residues: E3 ubiquitin-protein ligase dbl4 (504 aa).

A TRIAD supradomain region spans residues 127–338; sequence HEGTCEICYD…NNWYTCNRYE (212 aa). Residues Cys131, Cys134, Cys147, His149, Cys152, Cys155, Cys173, Cys178, Cys217, Cys222, Cys244, Cys246, Cys251, Cys254, His259, Cys264, Cys291, and Cys294 each coordinate Zn(2+). An RING-type 1 zinc finger spans residues 131-178; that stretch reads CEICYDEGCLPFFSAECDHEFCLACYRQYLDSRISEGESVIQCPEESC. Residues 197 to 264 form an IBR-type zinc finger; that stretch reads DRYHRLLDRS…GHDNHQPTIC (68 aa). The RING-type 2; atypical zinc-finger motif lies at 291 to 320; that stretch reads CPKCSTTIEKNGGCNHMTCKKCKYEFCWVC. The active site involves Cys304. Positions 309, 312, 317, 320, 327, and 334 each coordinate Zn(2+).

Belongs to the RBR family.

The protein localises to the cytoplasm. It localises to the nucleus. It carries out the reaction [E2 ubiquitin-conjugating enzyme]-S-ubiquitinyl-L-cysteine + [acceptor protein]-L-lysine = [E2 ubiquitin-conjugating enzyme]-L-cysteine + [acceptor protein]-N(6)-ubiquitinyl-L-lysine.. The protein operates within protein modification; protein ubiquitination. Its function is as follows. Probable ubiquitin-protein ligase involved in the degradation-related ubiquitination of histones. Contributes to the post-translational regulation of histone protein levels by polyubiquitination of excess histones for subsequent degradation. The chain is E3 ubiquitin-protein ligase dbl4 from Schizosaccharomyces pombe (strain 972 / ATCC 24843) (Fission yeast).